The chain runs to 576 residues: Polypeptide N-acetylgalactosaminyltransferase 12 (576 aa).

Topologically, residues 1–19 are cytoplasmic; it reads MWGRAVRRRCPRGLRRGRE. The chain crosses the membrane as a helical; Signal-anchor for type II membrane protein span at residues 20 to 37; that stretch reads ALLALLALAGLGALLRAR. Positions 38 to 58 are disordered; it reads SRSGTVDPGPPRTPLPGRHEP. Residues 38–576 are Lumenal-facing; sequence SRSGTVDPGP…QRWFFKERMS (539 aa). Cystine bridges form between cysteine 120/cysteine 353, cysteine 344/cysteine 417, cysteine 453/cysteine 474, cysteine 501/cysteine 516, and cysteine 542/cysteine 561. The catalytic subdomain A stretch occupies residues 130–239; sequence LPKTSVVIAF…EGWLEPLLQR (110 aa). 2 residues coordinate substrate: aspartate 171 and arginine 200. The Mn(2+) site is built by aspartate 223 and histidine 225. Residues 299 to 361 are catalytic subdomain B; that stretch reads VIRSPTMAGG…PCSHVGHVFP (63 aa). Position 330 (tryptophan 330) interacts with substrate. Histidine 358 lines the Mn(2+) pocket. Substrate is bound at residue tyrosine 366. A Ricin B-type lectin domain is found at 440–572; it reads FFGMLQNRGL…NSDNQRWFFK (133 aa).

Belongs to the glycosyltransferase 2 family. GalNAc-T subfamily. It depends on Mn(2+) as a cofactor.

The protein localises to the golgi apparatus membrane. It catalyses the reaction L-seryl-[protein] + UDP-N-acetyl-alpha-D-galactosamine = a 3-O-[N-acetyl-alpha-D-galactosaminyl]-L-seryl-[protein] + UDP + H(+). The catalysed reaction is L-threonyl-[protein] + UDP-N-acetyl-alpha-D-galactosamine = a 3-O-[N-acetyl-alpha-D-galactosaminyl]-L-threonyl-[protein] + UDP + H(+). It participates in protein modification; protein glycosylation. Its function is as follows. Catalyzes the initial reaction in O-linked oligosaccharide biosynthesis, the transfer of an N-acetyl-D-galactosamine residue to a serine or threonine residue on the protein receptor. Has activity toward non-glycosylated peptides such as Muc5AC, Muc1a and EA2, and no detectable activity with Muc2 and Muc7. Displays enzymatic activity toward the Gal-NAc-Muc5AC glycopeptide, but no detectable activity to mono-GalNAc-glycosylated Muc1a, Muc2, Muc7 and EA2. May play an important role in the initial step of mucin-type oligosaccharide biosynthesis in digestive organs. This chain is Polypeptide N-acetylgalactosaminyltransferase 12 (Galnt12), found in Mus musculus (Mouse).